Here is a 273-residue protein sequence, read N- to C-terminus: Tyrosinase (273 aa).

The Cu cation site is built by H37, H53, H62, H189, H193, and H215.

This sequence belongs to the tyrosinase family. The cofactor is Cu(2+).

It catalyses the reaction 2 L-dopa + O2 = 2 L-dopaquinone + 2 H2O. The catalysed reaction is L-tyrosine + O2 = L-dopaquinone + H2O. In terms of biological role, this is a copper-containing oxidase that functions in the formation of pigments such as melanins and other polyphenolic compounds. The polypeptide is Tyrosinase (melC2) (Streptomyces lincolnensis).